The chain runs to 347 residues: GMP reductase (347 aa).

108–131 (ADFEKTQQILSQNPQLNFVCIDVA) lines the NADP(+) pocket. The K(+) site is built by G181 and G183. C186 functions as the Thioimidate intermediate in the catalytic mechanism. 216-239 (IISDGGCTMPGDVAKAFGGGADFV) lines the NADP(+) pocket.

Belongs to the IMPDH/GMPR family. GuaC type 1 subfamily. In terms of assembly, homotetramer.

It carries out the reaction IMP + NH4(+) + NADP(+) = GMP + NADPH + 2 H(+). Its function is as follows. Catalyzes the irreversible NADPH-dependent deamination of GMP to IMP. It functions in the conversion of nucleobase, nucleoside and nucleotide derivatives of G to A nucleotides, and in maintaining the intracellular balance of A and G nucleotides. This Klebsiella pneumoniae subsp. pneumoniae (strain ATCC 700721 / MGH 78578) protein is GMP reductase.